We begin with the raw amino-acid sequence, 632 residues long: Cell pattern formation-associated protein stuA (632 aa).

A compositionally biased stretch (polar residues) spans 1-20; sequence MNQTQSYMDVHTSHFSSPQP. Residues 1–27 are disordered; it reads MNQTQSYMDVHTSHFSSPQPYGSHGAT. In terms of domain architecture, HTH APSES-type spans 128–234; sequence RVTATLWEDE…HNIGGLLYHP (107 aa). A DNA-binding region (H-T-H motif) is located at residues 162 to 183; sequence GTKLLNVAGMTRGRRDGILKSE. 4 disordered regions span residues 246–315, 340–386, 403–460, and 473–632; these read DSQQ…ASSL, QNVP…KSYY, AHSL…QQEP, and NRNS…MRRR. Polar residues-rich tracts occupy residues 254–264, 275–295, 340–354, and 364–376; these read GSQTARTSQGP, MNGS…QTNG, QNVP…TRSM, and GNNL…YQNQ. Over residues 377-386 the composition is skewed to low complexity; sequence PAYDSSKSYY. Residues 428 to 438 are compositionally biased toward basic and acidic residues; it reads EQEHDEVKVDR. Positions 473 to 506 are enriched in polar residues; the sequence is NRNSYTYTTNPSVSSLSGDHSQLGGSPSHQNGSD. Residues 558–576 are compositionally biased toward low complexity; it reads AYASNYSGYSSVNGSSMGS. Residues 578-604 form a nuclear localization domain region; it reads KRMRDDDDDHLSRSDGRENEYETKRRK. Residues 579-600 show a composition bias toward basic and acidic residues; that stretch reads RMRDDDDDHLSRSDGRENEYET.

This sequence belongs to the EFG1/PHD1/stuA family.

The protein localises to the nucleus. Transcription factor that regulates asexual reproduction. Binds the StuA-response elements (StRE) with the consensus sequence 5'-(A/T)CGCG(T/A)N(A/C)-3' at the promoters of target genes. Required for accurate spatial organization of the developing conidiophore. Primarily involved in the formation of the uninucleate sterigmata, which arise by budding in this multicellular structure. Required for metula and phialide formation during conidiation but is not required for dimorphic growth. The chain is Cell pattern formation-associated protein stuA from Talaromyces marneffei (Penicillium marneffei).